The primary structure comprises 351 residues: Soluble interferon alpha/beta receptor OPG204 (351 aa).

The N-terminal stretch at 1–23 (MKMKMMVRIYFVSLSLLLFHSYA) is a signal peptide. 2 Ig-like C2-type domains span residues 65–137 (LGEP…KNGD) and 155–237 (PKTY…IVVS). Cystine bridges form between Cys-73-Cys-129 and Cys-172-Cys-221. N-linked (GlcNAc...) asparagine; by host glycosylation is found at Asn-117, Asn-182, Asn-261, Asn-269, and Asn-321. One can recognise an Ig-like V-type domain in the interval 246-345 (PSQDHRFKLI…HNYYFDKTLT (100 aa)). A disulfide bond links Cys-272 and Cys-333.

It belongs to the interleukin-1 receptor family. As to quaternary structure, interacts with host IFNA1.

Its subcellular location is the secreted. Its function is as follows. Counteracts the antiviral effects of host IFN-alpha/beta and key IFN-inducible proteins involved in viral RNA degradation suxh as host OAS1. Acts as a soluble IFN-alpha receptor and thus inhibits the interaction between host IFN-alpha and its receptor. The polypeptide is Soluble interferon alpha/beta receptor OPG204 (OPG204) (Cynomys gunnisoni (Gunnison's prairie dog)).